We begin with the raw amino-acid sequence, 496 residues long: MGSLEMVPMGAGPPSPGGDPDGDDGGNNSQYPSASGSSGNTPTPPNDEERESNEEPPPPYEDPYWGNGDRHSDYQPLGTQDQSLYLGLQHDGNDGLPPPPYSPRDDSSQHIYEEAGRGSMNPVCLPVIVAPYLFWLAAIAASCFTASVSTVVTATGLALSLLLLAAVASSYAAAQRKLLTPVTVLTAVVFFAICLTWRIEDPPFNSLLFALLAAAGGLQGIYVLVMLVLLILAYRRRWRRLTVCGGIMFLACVLVLIVDAVLQLSPLLGAVTVVSMTLLLLAFVLWLSSPGGLGTLGAALLTLAAALALLASLILGTLNLTTMFLLMLLWTLVVLLICSSCSSCPLTKILLARLFLYALALLLLASALIAGGSILQTNFKSLSSTEFIPNLFCMLLLIVAGILFILAILTEWGSGNRTYGPVFMCLGGLLTMVAGAVWLTVMTNTLLSAWILTAGFLIFLIGFALFGVIRCCRYCCYYCLTLESEERPPTPYRNTV.

Residues 1–108 are disordered; that stretch reads MGSLEMVPMG…PPYSPRDDSS (108 aa). The Cytoplasmic portion of the chain corresponds to 1 to 123; the sequence is MGSLEMVPMG…EAGRGSMNPV (123 aa). A compositionally biased stretch (polar residues) spans 27-41; the sequence is NNSQYPSASGSSGNT. The PPxY motif signature appears at 97 to 101; that stretch reads PPPPY. A Phosphotyrosine; by host modification is found at tyrosine 112. The helical transmembrane segment at 124–144 threads the bilayer; sequence CLPVIVAPYLFWLAAIAASCF. Topologically, residues 145-147 are extracellular; that stretch reads TAS. A helical membrane pass occupies residues 148–168; the sequence is VSTVVTATGLALSLLLLAAVA. At 169–177 the chain is on the cytoplasmic side; sequence SSYAAAQRK. Residues 178-197 traverse the membrane as a helical segment; that stretch reads LLTPVTVLTAVVFFAICLTW. Over 198–210 the chain is Extracellular; sequence RIEDPPFNSLLFA. The chain crosses the membrane as a helical span at residues 211–231; that stretch reads LLAAAGGLQGIYVLVMLVLLI. Over 232–240 the chain is Cytoplasmic; that stretch reads LAYRRRWRR. Residues 241-261 traverse the membrane as a helical segment; that stretch reads LTVCGGIMFLACVLVLIVDAV. The Extracellular portion of the chain corresponds to 262–266; the sequence is LQLSP. The helical transmembrane segment at 267-287 threads the bilayer; the sequence is LLGAVTVVSMTLLLLAFVLWL. At 288-295 the chain is on the cytoplasmic side; it reads SSPGGLGT. A helical transmembrane segment spans residues 296–316; sequence LGAALLTLAAALALLASLILG. Threonine 317 is a topological domain (extracellular). Residues 318–338 form a helical membrane-spanning segment; sequence LNLTTMFLLMLLWTLVVLLIC. Topologically, residues 339-353 are cytoplasmic; the sequence is SSCSSCPLTKILLAR. The chain crosses the membrane as a helical span at residues 354-374; it reads LFLYALALLLLASALIAGGSI. The Extracellular segment spans residues 375-387; it reads LQTNFKSLSSTEF. A helical transmembrane segment spans residues 388–408; the sequence is IPNLFCMLLLIVAGILFILAI. Residues 409–421 lie on the Cytoplasmic side of the membrane; it reads LTEWGSGNRTYGP. Residues 422–442 traverse the membrane as a helical segment; it reads VFMCLGGLLTMVAGAVWLTVM. Over 443-448 the chain is Extracellular; it reads TNTLLS. The helical transmembrane segment at 449-469 threads the bilayer; that stretch reads AWILTAGFLIFLIGFALFGVI. The Cytoplasmic portion of the chain corresponds to 470–496; that stretch reads RCCRYCCYYCLTLESEERPPTPYRNTV.

This sequence belongs to the herpesviridae LMP-2 family. In terms of assembly, the cytoplasmic N-terminal domain interacts with human SRC family protein tyrosine kinases SYK and LYN. Binds human ITCH, WWP2 and NEDD4L. In terms of processing, phosphorylated on cytoplasmic N-terminal tyrosine residues, possibly by human LYN. Can be ubiquitinated by human ITCH and WWP2 on the N-terminus in a lysine-independent manner.

It localises to the host cell membrane. The protein resides in the host endomembrane system. It is found in the host cytoplasm. The protein localises to the host perinuclear region. Functionally, maintains EBV latent infection of B-lymphocyte, by preventing lytic reactivation of the virus in response to surface immunoglobulin (sIg) cross-linking. Acts like a dominant negative inhibitor of the sIg-associated protein tyrosine kinases, LYN and SYK. Also blocks translocation of the B-cell antigen receptor (BCR) into lipid rafts, preventing the subsequent signaling and accelerated internalization of the BCR upon BCR cross-linking. Serves as a molecular scaffold to recruit SYK, LYN and E3 protein-ubiquitin ligases, such as ITCH and NEDD4L, leading to ubiquitination and potential degradation of both tyrosines kinases. Possesses a constitutive signaling activity in non-transformed cells, inducing bypass of normal B lymphocyte developmental checkpoints allowing immunoglobulin-negative cells to colonize peripheral lymphoid organs. Its function is as follows. May be a negative regulator of isoform LMP2A. In Homo sapiens (Human), this protein is Latent membrane protein 2 (LMP2).